The following is a 1683-amino-acid chain: Phospholipase D1 (1683 aa).

Disordered stretches follow at residues 1–150, 173–198, 259–289, and 384–416; these read MSNV…AYTQ, LKSSVNSPTPAGSGHRHNQHQHQQVN, ILDITNSNHNHRGNNNNNTGENSDRRPSIPR, and VMEKKAENKPSSAASAPHTSENNNNDNGSNITS. S2 is subject to N-acetylserine. S8 and S30 each carry phosphoserine. Composition is skewed to basic and acidic residues over residues 20-34, 63-82, and 90-112; these read SVTEEVDRVNSRPDE, NGKEAERKHALPKSFVDRNL, and SLDHIMHSNEHDPRRGSDEENMH. Residues 116 to 125 show a composition bias toward low complexity; that stretch reads NNLHSSNNNV. Residues 141–150 are compositionally biased toward polar residues; it reads RRSSSVAYTQ. S145 carries the post-translational modification Phosphoserine. The segment covering 263–279 has biased composition (low complexity); sequence TNSNHNHRGNNNNNTGE. The PX domain maps to 291 to 487; it reads SSIISISSNV…EFYELSPLGN (197 aa). Positions 392 to 404 are enriched in polar residues; that stretch reads KPSSAASAPHTSE. The segment covering 405-416 has biased composition (low complexity); the sequence is NNNNDNGSNITS. Positions 496–664 constitute a PH domain; it reads QGKQGYLVIR…SSIIKMSTST (169 aa). PLD phosphodiesterase domains follow at residues 791-818 and 1091-1118; these read YFWAHHEKFVVIDETFAFIGGTDLCYGR and EQLYVHAKILIADDRRCIIGSANINERS. Active-site residues include H796, K798, D803, H1096, K1098, and D1103. The tract at residues 1430 to 1465 is disordered; sequence KDMRRHLSSSTESTRNGSNSLPLNEKSNEGESTNVD. Positions 1437–1451 are enriched in polar residues; that stretch reads SSSTESTRNGSNSLP. Residue S1461 is modified to Phosphoserine. Position 1462 is a phosphothreonine (T1462).

It belongs to the phospholipase D family. Interacts with SRF1.

The catalysed reaction is a 1,2-diacyl-sn-glycero-3-phosphocholine + H2O = a 1,2-diacyl-sn-glycero-3-phosphate + choline + H(+). Its activity is regulated as follows. Activity is dependent of phosphatidylinositol 4,5-bisphosphate and the regulator SRF1. Inhibited by magnesium. Its function is as follows. Required for meiosis and spore formation. Seems to be involved in the coordinate induction of late meiotic events. PLD activity is induced under sporulation conditions and seems to be necessary to complete the meiotic cycle, but not for vegetative cell growth. The polypeptide is Phospholipase D1 (SPO14) (Saccharomyces cerevisiae (strain ATCC 204508 / S288c) (Baker's yeast)).